The primary structure comprises 348 residues: Flagellar P-ring protein (348 aa).

An N-terminal signal peptide occupies residues 1-16 (MRVLTIFLLFMTSIFA).

It belongs to the FlgI family. As to quaternary structure, the basal body constitutes a major portion of the flagellar organelle and consists of four rings (L,P,S, and M) mounted on a central rod.

It is found in the periplasm. The protein resides in the bacterial flagellum basal body. Its function is as follows. Assembles around the rod to form the L-ring and probably protects the motor/basal body from shearing forces during rotation. The chain is Flagellar P-ring protein from Campylobacter jejuni subsp. jejuni serotype O:23/36 (strain 81-176).